A 109-amino-acid polypeptide reads, in one-letter code: Cell division protein ZapA (109 aa).

The stretch at 21-99 forms a coiled coil; the sequence is PEQLDALNQA…IEQALLEQGR (79 aa).

This sequence belongs to the ZapA family. Type 1 subfamily. As to quaternary structure, homodimer. Interacts with FtsZ.

Its subcellular location is the cytoplasm. Activator of cell division through the inhibition of FtsZ GTPase activity, therefore promoting FtsZ assembly into bundles of protofilaments necessary for the formation of the division Z ring. It is recruited early at mid-cell but it is not essential for cell division. The protein is Cell division protein ZapA of Edwardsiella ictaluri (strain 93-146).